The primary structure comprises 433 residues: Probable non-inhibitory serpin-Z5 (433 aa).

Residues 1–12 (MEPKEKKQKLDT) are compositionally biased toward basic and acidic residues. Residues 1-43 (MEPKEKKQKLDTSEVASPSLSKTHLKKKKTKKQKIRKSQEITS) form a disordered region. The span at 23–36 (THLKKKKTKKQKIR) shows a compositional bias: basic residues. An RCL region spans residues 380-404 (GTEAVTFTAFRSAYLGCALVKPIDF).

The protein belongs to the serpin family. In terms of tissue distribution, weakly expressed during seedling development.

This is Probable non-inhibitory serpin-Z5 from Arabidopsis thaliana (Mouse-ear cress).